The sequence spans 199 residues: COMM domain-containing protein 2 (199 aa).

In terms of domain architecture, COMM spans 123 to 190 (SYHNLEWRLD…QALEEMKTNH (68 aa)).

It belongs to the COMM domain-containing protein 2 family. As to quaternary structure, component of the commander complex consisting of the CCC subcomplex and the retriever subcomplex. Component of the CCC (COMMD/CCDC22/CCDC93) subcomplex consisting of COMMD1, COMMD2, COMMD3, COMMD4, COMMD5, COMMD6, COMMD7, COMMD8, COMMD9, COMMD10, CCDC22 and CCDC93; within the complex forms a heterodimer with COMMD3. Interacts with RELA, RELB, NFKB1/p105, NFKB2/p100. Interacts with CCDC22, CCDC93, SCNN1B, CUL3, CUL4B, CUL5, CUL7.

It is found in the cytoplasm. Its function is as follows. Scaffold protein in the commander complex that is essential for endosomal recycling of transmembrane cargos; the commander complex is composed of the CCC subcomplex and the retriever subcomplex. May modulate activity of cullin-RING E3 ubiquitin ligase (CRL) complexes. May down-regulate activation of NF-kappa-B. The polypeptide is COMM domain-containing protein 2 (COMMD2) (Pongo abelii (Sumatran orangutan)).